The primary structure comprises 239 residues: uncharacterized protein (239 aa).

This is an uncharacterized protein from Edwardsiella ictaluri (strain 93-146).